The sequence spans 256 residues: Spore coat polysaccharide biosynthesis protein SpsA (256 aa).

A disulfide bond links cysteine 155 and cysteine 243. Residue aspartate 191 is part of the active site.

The protein belongs to the glycosyltransferase 2 family. As to quaternary structure, monomer in solution.

It participates in spore coat biogenesis; spore coat polysaccharide biosynthesis. Glycosyltransferase implicated in the synthesis of the spore coat. The polypeptide is Spore coat polysaccharide biosynthesis protein SpsA (spsA) (Bacillus subtilis (strain 168)).